Here is a 522-residue protein sequence, read N- to C-terminus: Gypsy retrotransposon integrase-like protein 1 (522 aa).

The 158-residue stretch at 135-292 (KVENPWSLVT…TPYFQMFSRN (158 aa)) folds into the Integrase catalytic domain. The residue at position 502 (S502) is a Phosphoserine.

As to expression, widely expressed. Also found in tumors originating from parathyroid gland, colon, stomach, bladder, uterus and prostate.

This chain is Gypsy retrotransposon integrase-like protein 1 (GIN1), found in Homo sapiens (Human).